The sequence spans 30 residues: Hemocyanin subunit 2 (30 aa).

This sequence belongs to the tyrosinase family. Hemocyanin subfamily. As to expression, hemolymph.

Its subcellular location is the secreted. The protein resides in the extracellular space. Functionally, hemocyanins are copper-containing oxygen carriers occurring freely dissolved in the hemolymph of many mollusks and arthropods. This Homarus americanus (American lobster) protein is Hemocyanin subunit 2.